We begin with the raw amino-acid sequence, 341 residues long: Anthranilate phosphoribosyltransferase (341 aa).

Residues G79, 82-83 (GD), T87, 89-92 (NIST), 107-115 (KHGNRAVSS), and S119 each bind 5-phospho-alpha-D-ribose 1-diphosphate. G79 is a binding site for anthranilate. S91 contributes to the Mg(2+) binding site. An anthranilate-binding site is contributed by N110. R165 lines the anthranilate pocket. The Mg(2+) site is built by D224 and E225.

This sequence belongs to the anthranilate phosphoribosyltransferase family. Homodimer. Mg(2+) is required as a cofactor.

It carries out the reaction N-(5-phospho-beta-D-ribosyl)anthranilate + diphosphate = 5-phospho-alpha-D-ribose 1-diphosphate + anthranilate. The protein operates within amino-acid biosynthesis; L-tryptophan biosynthesis; L-tryptophan from chorismate: step 2/5. Catalyzes the transfer of the phosphoribosyl group of 5-phosphorylribose-1-pyrophosphate (PRPP) to anthranilate to yield N-(5'-phosphoribosyl)-anthranilate (PRA). The protein is Anthranilate phosphoribosyltransferase of Bacillus cereus (strain AH820).